The chain runs to 467 residues: Glutamyl-tRNA reductase (467 aa).

Substrate contacts are provided by residues 49–52 (TCNR), Ser-109, 114–116 (EQQ), and Gln-120. Cys-50 functions as the Nucleophile in the catalytic mechanism. 189–194 (GAGAMG) is a binding site for NADP(+). The interval 446-467 (GFSDTTRYGTSPAQSSSKYHAE) is disordered. The span at 447 to 467 (FSDTTRYGTSPAQSSSKYHAE) shows a compositional bias: polar residues.

This sequence belongs to the glutamyl-tRNA reductase family. Homodimer.

It carries out the reaction (S)-4-amino-5-oxopentanoate + tRNA(Glu) + NADP(+) = L-glutamyl-tRNA(Glu) + NADPH + H(+). It functions in the pathway porphyrin-containing compound metabolism; protoporphyrin-IX biosynthesis; 5-aminolevulinate from L-glutamyl-tRNA(Glu): step 1/2. Its function is as follows. Catalyzes the NADPH-dependent reduction of glutamyl-tRNA(Glu) to glutamate 1-semialdehyde (GSA). The sequence is that of Glutamyl-tRNA reductase from Mycobacterium leprae (strain TN).